A 404-amino-acid chain; its full sequence is ATP phosphoribosyltransferase regulatory subunit (404 aa).

This sequence belongs to the class-II aminoacyl-tRNA synthetase family. HisZ subfamily. As to quaternary structure, heteromultimer composed of HisG and HisZ subunits.

It localises to the cytoplasm. The protein operates within amino-acid biosynthesis; L-histidine biosynthesis; L-histidine from 5-phospho-alpha-D-ribose 1-diphosphate: step 1/9. Functionally, required for the first step of histidine biosynthesis. May allow the feedback regulation of ATP phosphoribosyltransferase activity by histidine. The protein is ATP phosphoribosyltransferase regulatory subunit of Trichormus variabilis (strain ATCC 29413 / PCC 7937) (Anabaena variabilis).